A 496-amino-acid chain; its full sequence is Protein TOO MANY MOUTHS (496 aa).

The N-terminal stretch at 1 to 23 (MARYEFFRQIFIVLSIVSPLVRS) is a signal peptide. At 24–473 (FTVITSDSTA…ATDVSSTSKS (450 aa)) the chain is on the extracellular side. LRR repeat units follow at residues 158-182 (GSSL…LGNL), 183-208 (TNLK…RFSG), 210-228 (RSLD…GFVL), 229-252 (PALS…LTSC), 254-276 (SLIK…INRL), 277-300 (NQLV…LQGL), 302-325 (SLQA…AFKG), 326-350 (LKNL…LTRL), 351-373 (NSLR…EFRD), and 375-401 (KHLS…VWRM). 2 N-linked (GlcNAc...) asparagine glycosylation sites follow: Asn-181 and Asn-196. N-linked (GlcNAc...) asparagine glycosylation occurs at Asn-362. A disordered region spans residues 438-464 (AETSRPAPSGTVQHLSREEDGALPDGA). The chain crosses the membrane as a helical span at residues 474–494 (LGFSYLSAFFLVFPNFIFMLI). Topologically, residues 495–496 (SS) are cytoplasmic.

Belongs to the RLP family. As to quaternary structure, forms heterodimer with ERECTA or ERL1 through their extracellular domains. Not able to form homodimer. Interacts with EPF2 but not with EPF1. Interacts with SERK1, SERK2, SERK3/BAK1 and SERK4. Interacts with EPFL9/STOMAGEN. In terms of tissue distribution, in epidermal cells of developing shoots and leaves, but not in roots. Expressed in the stomatal cell lineage in the developing epidermis. Accumulates strongly in meristemoid mother cells (MMC) and meristemoids, somewhat less in meristemoid sister cells (stomatal-lineage ground cells, SLGC), and is barely detected in pavement cells.

Its subcellular location is the cell membrane. Promotes cell fate progression in stomatal development. In leaves, needed to correctly orient spacing divisions, to limit the number of asymmetric divisions in neighbor cells, and to promote the asymmetric (amplifying) divisions of meristemoids. In stems, promotes the conversion of meristemoids into guard mother cells (GMC). Positively regulates CAPRICE (CPC) expression in differentiating stomaless-forming cell files. Forms constitutive complexes with ERECTA and ERL1 involved in the recognition of the stomatal regulatory peptides EPF1, EPF2 and EPFL9/STOMAGEN. Modulates the activity of the ligand-receptor pairs EPF2-ERECTA and EPF1-ERL1 in stomatal development. Functions in a combinatorial specific manner with the ERECTA-family (ERf) receptor kinases in the regulation of the immune response. The sequence is that of Protein TOO MANY MOUTHS from Arabidopsis thaliana (Mouse-ear cress).